We begin with the raw amino-acid sequence, 511 residues long: Ribonuclease Y (511 aa).

A helical transmembrane segment spans residues 2–22; the sequence is ITTVIIAIVCFAVGGGLSYML. The 61-residue stretch at 201–261 folds into the KH domain; the sequence is SVTVFHIESD…VRREIARLAL (61 aa). The HD domain maps to 327–420; it reads LLQHARETAN…VQVCDAISGA (94 aa).

Belongs to the RNase Y family.

The protein resides in the cell membrane. Its function is as follows. Endoribonuclease that initiates mRNA decay. This Phocaeicola vulgatus (strain ATCC 8482 / DSM 1447 / JCM 5826 / CCUG 4940 / NBRC 14291 / NCTC 11154) (Bacteroides vulgatus) protein is Ribonuclease Y.